A 292-amino-acid chain; its full sequence is Ribosomal RNA small subunit methyltransferase A (292 aa).

6 residues coordinate S-adenosyl-L-methionine: N28, L30, G55, E76, D101, and N126.

Belongs to the class I-like SAM-binding methyltransferase superfamily. rRNA adenine N(6)-methyltransferase family. RsmA subfamily.

It is found in the cytoplasm. The enzyme catalyses adenosine(1518)/adenosine(1519) in 16S rRNA + 4 S-adenosyl-L-methionine = N(6)-dimethyladenosine(1518)/N(6)-dimethyladenosine(1519) in 16S rRNA + 4 S-adenosyl-L-homocysteine + 4 H(+). Specifically dimethylates two adjacent adenosines (A1518 and A1519) in the loop of a conserved hairpin near the 3'-end of 16S rRNA in the 30S particle. May play a critical role in biogenesis of 30S subunits. The sequence is that of Ribosomal RNA small subunit methyltransferase A from Bacillus mycoides (strain KBAB4) (Bacillus weihenstephanensis).